Consider the following 349-residue polypeptide: UPF0324 inner membrane protein YeiH (349 aa).

Over 1–12 (MTELTLQNHCRT) the chain is Periplasmic. Residues 13–35 (MWHFIPGLALSAVITGVALWGGA) form a helical membrane-spanning segment. At 36-38 (IPA) the chain is on the cytoplasmic side. A helical transmembrane segment spans residues 39–61 (VAGAGFSALTLAILLGMVIGNTI). Residues 62 to 99 (YPQIWKQCDGGVLFAKQHLLRLGIILYGFRLTFSQIAD) lie on the Periplasmic side of the membrane. Residues 100–122 (VGISGIVIDVLTLSSTFMLACFL) traverse the membrane as a helical segment. Residues 123 to 131 (GQKVFGLDR) are Cytoplasmic-facing. Residues 132-151 (HTSWLIGAGSSICGAAAVLA) traverse the membrane as a helical segment. The Periplasmic segment spans residues 152–162 (TEPVVKAEASK). Residues 163 to 185 (VTVAVATVVIFGTIAIFLYPAMY) traverse the membrane as a helical segment. Over 186–261 (PLLAHWFSPE…SPATGAEKSK (76 aa)) the chain is Cytoplasmic. The helical transmembrane segment at 262–284 (ITIPWFAIFFIVVAIFNSFHLLP) threads the bilayer. At 285–290 (KAVVDM) the chain is on the periplasmic side. The helical transmembrane segment at 291–313 (LVTLDTVLLAMAMAALGLTTHVS) threads the bilayer. Residues 314 to 322 (ALKKAGAKP) are Cytoplasmic-facing. The chain crosses the membrane as a helical span at residues 323 to 345 (LLMALALFAWLIIGGGAINVLIH). The Periplasmic portion of the chain corresponds to 346-349 (SLIA).

The protein belongs to the UPF0324 family.

The protein resides in the cell inner membrane. In Salmonella typhimurium (strain LT2 / SGSC1412 / ATCC 700720), this protein is UPF0324 inner membrane protein YeiH (yeiH).